The following is a 704-amino-acid chain: MSGAALGIEIVVVFFLALFLLHRYGDFKKQQRMVLFGTLLAWYLCFLIVFILPLDVSTTIYNQCLIDQEAQTQTPSVSPVLSEQTTANASISPAKSTQRVCYKPWSYIPDGIMPVFWRVVYWTSQCLTWLLLPFMQSYARSGGFTITGKIKTALIENAIYYGTYLFIFGSLLIYVAVHPQWHLSWYELQTIGITAANTWGLFLLVLLLGYGLVDIPRSYWEASRQGHLLIKTYFKAAKLMTEKADSEENLEDVMEEVRKINESIKYNHPLRKNVDTILRKCPLEYQEKMGRNMDDFEDFDDKQNSYPTERSLSKLHKQVIYAVQRHNRTRVQWQILLEQAFHLEDVAKNETSTSRQFVHSFAPPEPVGWFRRYIYTPTAEWYWECLLKQWFYRVLAVVLALFSVAVVWSECTFFSTHPVLSLFAVFIQLAERDYNYLYIEMACFITIFFLCTCVYSTVFRIRVFNYYYLASHHQTDAYSLQFSGMLFCRLTPPLCLNFLGLIHMDSAISHQAKKQTAYTSIMGSMRVLSFIANGFYIYYPMLIVVLCIATYFSLGTRCLNLLGFQQFMGENEMTSDLIDEGRELLRRERRKRQRIEDGENRRREWRERYAQRDENAARNRTSMSEMKETNYGETLNANTNRQAKYTRSGSQSGRDSIELLQDAEPLDFNAETLTDDPLQSDTGRHAGGRYLSMSSSRNRIFDDV.

Topologically, residues 1–3 (MSG) are extracellular. A helical membrane pass occupies residues 4–21 (AALGIEIVVVFFLALFLL). The Cytoplasmic portion of the chain corresponds to 22–33 (HRYGDFKKQQRM). Residues 34-54 (VLFGTLLAWYLCFLIVFILPL) form a helical membrane-spanning segment. The Extracellular segment spans residues 55–111 (DVSTTIYNQCLIDQEAQTQTPSVSPVLSEQTTANASISPAKSTQRVCYKPWSYIPDG). Asparagine 88 is a glycosylation site (N-linked (GlcNAc...) asparagine). Residues 112–132 (IMPVFWRVVYWTSQCLTWLLL) form a helical membrane-spanning segment. Residues 133-157 (PFMQSYARSGGFTITGKIKTALIEN) lie on the Cytoplasmic side of the membrane. The helical transmembrane segment at 158 to 178 (AIYYGTYLFIFGSLLIYVAVH) threads the bilayer. The Extracellular portion of the chain corresponds to 179 to 192 (PQWHLSWYELQTIG). The helical transmembrane segment at 193–213 (ITAANTWGLFLLVLLLGYGLV) threads the bilayer. Residues 214-393 (DIPRSYWEAS…ECLLKQWFYR (180 aa)) lie on the Cytoplasmic side of the membrane. Residues 235-266 (KAAKLMTEKADSEENLEDVMEEVRKINESIKY) adopt a coiled-coil conformation. A helical transmembrane segment spans residues 394-414 (VLAVVLALFSVAVVWSECTFF). The Extracellular segment spans residues 415 to 438 (STHPVLSLFAVFIQLAERDYNYLY). The chain crosses the membrane as a helical span at residues 439–459 (IEMACFITIFFLCTCVYSTVF). Over 460–481 (RIRVFNYYYLASHHQTDAYSLQ) the chain is Cytoplasmic. The chain crosses the membrane as a helical span at residues 482-502 (FSGMLFCRLTPPLCLNFLGLI). Residues 503 to 527 (HMDSAISHQAKKQTAYTSIMGSMRV) are Extracellular-facing. Residues 528-548 (LSFIANGFYIYYPMLIVVLCI) traverse the membrane as a helical segment. The Cytoplasmic segment spans residues 549 to 704 (ATYFSLGTRC…SSRNRIFDDV (156 aa)). A coiled-coil region spans residues 576–612 (DLIDEGRELLRRERRKRQRIEDGENRRREWRERYAQR). 2 disordered regions span residues 613–654 (DENA…QSGR) and 672–704 (TLTDDPLQSDTGRHAGGRYLSMSSSRNRIFDDV). The segment covering 631–654 (YGETLNANTNRQAKYTRSGSQSGR) has biased composition (polar residues).

This sequence belongs to the LIMR family.

Its subcellular location is the cell membrane. Its function is as follows. May associate with G-protein coupled receptors and regulate downstream signaling pathways. In Danio rerio (Zebrafish), this protein is G-protein coupled receptor-associated protein LMBRD2B (lmbrd2b).